A 617-amino-acid polypeptide reads, in one-letter code: Neopullulanase SusA (617 aa).

Residues 1 to 22 (MKRNLLFIILLLLLPGLHQVFA) form the signal peptide. Ca(2+) is bound by residues N138, N143, D144, G164, and D166. Active-site residues include D331 and E360.

Belongs to the glycosyl hydrolase 13 family. Ca(2+) is required as a cofactor.

The protein localises to the periplasm. It carries out the reaction Hydrolysis of pullulan to panose (6-alpha-D-glucosylmaltose).. The protein operates within glycan degradation; starch degradation. Its function is as follows. Neopullulanase that cleaves 1,4-alpha-glucosidic linkages in starch to produce disaccharides or trisaccharides in starch degradation. The polypeptide is Neopullulanase SusA (susA) (Bacteroides thetaiotaomicron (strain ATCC 29148 / DSM 2079 / JCM 5827 / CCUG 10774 / NCTC 10582 / VPI-5482 / E50)).